The chain runs to 213 residues: ATP phosphoribosyltransferase (213 aa).

The protein belongs to the ATP phosphoribosyltransferase family. Short subfamily. As to quaternary structure, heteromultimer composed of HisG and HisZ subunits.

It is found in the cytoplasm. The catalysed reaction is 1-(5-phospho-beta-D-ribosyl)-ATP + diphosphate = 5-phospho-alpha-D-ribose 1-diphosphate + ATP. It functions in the pathway amino-acid biosynthesis; L-histidine biosynthesis; L-histidine from 5-phospho-alpha-D-ribose 1-diphosphate: step 1/9. Functionally, catalyzes the condensation of ATP and 5-phosphoribose 1-diphosphate to form N'-(5'-phosphoribosyl)-ATP (PR-ATP). Has a crucial role in the pathway because the rate of histidine biosynthesis seems to be controlled primarily by regulation of HisG enzymatic activity. In Thermoanaerobacter pseudethanolicus (strain ATCC 33223 / 39E) (Clostridium thermohydrosulfuricum), this protein is ATP phosphoribosyltransferase.